An 88-amino-acid chain; its full sequence is Small ribosomal subunit protein uS17 (88 aa).

This sequence belongs to the universal ribosomal protein uS17 family. Part of the 30S ribosomal subunit.

Functionally, one of the primary rRNA binding proteins, it binds specifically to the 5'-end of 16S ribosomal RNA. The sequence is that of Small ribosomal subunit protein uS17 from Prochlorococcus marinus (strain MIT 9301).